The sequence spans 149 residues: 3-dehydroquinate dehydratase (149 aa).

Catalysis depends on Y26, which acts as the Proton acceptor. N77, H83, and D90 together coordinate substrate. H103 (proton donor) is an active-site residue. Substrate is bound by residues 104 to 105 and R114; that span reads LS.

Belongs to the type-II 3-dehydroquinase family. As to quaternary structure, homododecamer.

It carries out the reaction 3-dehydroquinate = 3-dehydroshikimate + H2O. The protein operates within metabolic intermediate biosynthesis; chorismate biosynthesis; chorismate from D-erythrose 4-phosphate and phosphoenolpyruvate: step 3/7. Its function is as follows. Catalyzes a trans-dehydration via an enolate intermediate. The chain is 3-dehydroquinate dehydratase from Aeromonas salmonicida (strain A449).